Consider the following 59-residue polypeptide: UPF0434 protein Shew_1640 (59 aa).

This sequence belongs to the UPF0434 family.

This is UPF0434 protein Shew_1640 from Shewanella loihica (strain ATCC BAA-1088 / PV-4).